Here is a 216-residue protein sequence, read N- to C-terminus: Phosphatidylserine decarboxylase proenzyme (216 aa).

The active-site Schiff-base intermediate with substrate; via pyruvic acid is the Ser-183. Ser-183 is subject to Pyruvic acid (Ser); by autocatalysis.

The protein belongs to the phosphatidylserine decarboxylase family. PSD-A subfamily. In terms of assembly, heterodimer of a large membrane-associated beta subunit and a small pyruvoyl-containing alpha subunit. Requires pyruvate as cofactor. Post-translationally, is synthesized initially as an inactive proenzyme. Formation of the active enzyme involves a self-maturation process in which the active site pyruvoyl group is generated from an internal serine residue via an autocatalytic post-translational modification. Two non-identical subunits are generated from the proenzyme in this reaction, and the pyruvate is formed at the N-terminus of the alpha chain, which is derived from the carboxyl end of the proenzyme. The post-translation cleavage follows an unusual pathway, termed non-hydrolytic serinolysis, in which the side chain hydroxyl group of the serine supplies its oxygen atom to form the C-terminus of the beta chain, while the remainder of the serine residue undergoes an oxidative deamination to produce ammonia and the pyruvoyl prosthetic group on the alpha chain.

It is found in the cell membrane. It carries out the reaction a 1,2-diacyl-sn-glycero-3-phospho-L-serine + H(+) = a 1,2-diacyl-sn-glycero-3-phosphoethanolamine + CO2. It functions in the pathway phospholipid metabolism; phosphatidylethanolamine biosynthesis; phosphatidylethanolamine from CDP-diacylglycerol: step 2/2. In terms of biological role, catalyzes the formation of phosphatidylethanolamine (PtdEtn) from phosphatidylserine (PtdSer). This Cupriavidus taiwanensis (strain DSM 17343 / BCRC 17206 / CCUG 44338 / CIP 107171 / LMG 19424 / R1) (Ralstonia taiwanensis (strain LMG 19424)) protein is Phosphatidylserine decarboxylase proenzyme.